Reading from the N-terminus, the 407-residue chain is Cytochrome P450-pinF2, plant-inducible (407 aa).

Position 356 (Cys-356) interacts with heme.

The protein belongs to the cytochrome P450 family. It depends on heme as a cofactor.

Functionally, not essential for virulence, but may be involved in the detoxification of plant protective agents at the site of wounding. In Rhizobium radiobacter (Agrobacterium tumefaciens), this protein is Cytochrome P450-pinF2, plant-inducible (cyp104).